We begin with the raw amino-acid sequence, 248 residues long: Ribosomal RNA small subunit methyltransferase G (248 aa).

Residues glycine 85, phenylalanine 90, 108–110, 137–138, and arginine 156 contribute to the S-adenosyl-L-methionine site; these read DSS and AE.

It belongs to the methyltransferase superfamily. RNA methyltransferase RsmG family.

It localises to the cytoplasm. Functionally, specifically methylates the N7 position of a guanine in 16S rRNA. The sequence is that of Ribosomal RNA small subunit methyltransferase G from Prochlorococcus marinus (strain NATL2A).